The chain runs to 168 residues: MSSPQDRAQQYIGQLDKELSKYPTLNNLEKTTGVPKAYAVIGLVALYFFLIIFNLGGQLLTNLAGFVLPGYYSLNALFTASKQDDTQWLTYWVVFSLFTVIESLISVVYWFPFYFTFKFVFLLWLSLPTFKGAETIFRSFLAPTLGRYFQNGSTASGLRAKADAVHTD.

At 1-35 (MSSPQDRAQQYIGQLDKELSKYPTLNNLEKTTGVP) the chain is on the cytoplasmic side. A helical membrane pass occupies residues 36–55 (KAYAVIGLVALYFFLIIFNL). Position 56 (G56) is a topological domain, lumenal. A helical transmembrane segment spans residues 57–76 (GQLLTNLAGFVLPGYYSLNA). At 77–86 (LFTASKQDDT) the chain is on the cytoplasmic side. The chain crosses the membrane as a helical span at residues 87 to 103 (QWLTYWVVFSLFTVIES). At 104-105 (LI) the chain is on the lumenal side. The chain crosses the membrane as a helical span at residues 106-124 (SVVYWFPFYFTFKFVFLLW). Residues 125–168 (LSLPTFKGAETIFRSFLAPTLGRYFQNGSTASGLRAKADAVHTD) lie on the Cytoplasmic side of the membrane.

Belongs to the DP1 family. In terms of assembly, oligomer.

It is found in the endoplasmic reticulum membrane. The protein localises to the golgi apparatus membrane. Required to generate and maintain the structure of the tubular endoplasmic reticulum network and the vacuole. Induces high curvature in membranes and causes membrane tubule formation. Involved in membrane/vesicle trafficking. This chain is Protein yop-1 (yop-1), found in Neurospora crassa (strain ATCC 24698 / 74-OR23-1A / CBS 708.71 / DSM 1257 / FGSC 987).